Consider the following 4351-residue polypeptide: Protocadherin Fat 2 (4351 aa).

Residues 1 to 18 (MTLVLLGVAMVLLHRAAC) form the signal peptide. At 19 to 4050 (EKPLEETITP…IKRGDWGQQE (4032 aa)) the chain is on the extracellular side. Cadherin domains are found at residues 34–148 (THSL…KPLF) and 149–256 (SPPS…PPVI). 4 N-linked (GlcNAc...) asparagine glycosylation sites follow: N39, N210, N280, and N330. Cadherin domains follow at residues 363 to 458 (EKAV…APVF), 459 to 564 (NRSS…QPMF), 565 to 669 (EEVN…VPVQ), 716 to 820 (DHFP…PPRF), 821 to 925 (PPGG…PPQC), 926 to 1032 (ITEH…SPHF), 1033 to 1142 (SSFV…RPVF), 1138 to 1242 (SRPV…SPMF), 1243 to 1346 (SHKL…SSIP), 1350 to 1448 (DESH…RPQF), 1449 to 1555 (LQDH…SPHF), 1556 to 1660 (TQPR…APIF), 1661 to 1758 (SKDE…APAF), 1759 to 1872 (LKST…PPRF), 1873 to 1968 (SEQI…SLQF), 1969 to 2070 (DQDI…IPEF), 2071 to 2171 (QHLP…NPLF), 2172 to 2272 (QSPY…PPTF), 2273 to 2379 (SQLV…PPEF), 2380 to 2481 (REPQ…SPEF), 2482 to 2585 (QQNV…APQF), 2586 to 2692 (KASG…LPKF), 2693 to 2799 (SEPL…RPVF), 2800 to 2908 (EADP…PPRF), 2909 to 3013 (ASED…SPQC), 3014 to 3115 (SQLL…APRF), 3116 to 3220 (FPSH…LPIF), 3221 to 3323 (LNSE…HPRF), 3324 to 3428 (THDL…PPRF), 3429 to 3533 (FQLN…PPST), and 3534 to 3631 (LPLE…APQQ). N459, N568, N627, and N789 each carry an N-linked (GlcNAc...) asparagine glycan. N-linked (GlcNAc...) asparagine glycosylation is present at N996. 3 N-linked (GlcNAc...) asparagine glycosylation sites follow: N1175, N1276, and N1417. 13 N-linked (GlcNAc...) asparagine glycosylation sites follow: N1899, N1998, N2007, N2102, N2165, N2183, N2325, N2368, N2387, N2430, N2470, N2547, and N2597. N3127, N3278, and N3312 each carry an N-linked (GlcNAc...) asparagine glycan. N-linked (GlcNAc...) asparagine glycans are attached at residues N3432, N3603, N3770, N3774, N3815, N3842, N3875, and N3906. Positions 3775 to 3946 (GTTWRFSGQS…YLETWALSQC (172 aa)) constitute a Laminin G-like domain. 4 disulfides stabilise this stretch: C3914-C3946, C3953-C3964, C3958-C3974, and C3976-C3985. EGF-like domains lie at 3949 to 3986 (PGTTCSQNPCLNGGSCSPALGSGYLCRCPPLFSGRNCE) and 3988 to 4024 (GRENCTSAPCQEGGTCVSSPEGTSCSCPHPYTGDRCE). N3991 carries an N-linked (GlcNAc...) asparagine glycan. Disulfide bonds link C3992–C4003, C3997–C4012, and C4014–C4023. The chain crosses the membrane as a helical span at residues 4051 to 4071 (FLVIIVALPLLIIATVGLLLY). The Cytoplasmic segment spans residues 4072-4351 (CRRCKSHKPV…DYGSCEEVMF (280 aa)). The interval 4313-4340 (DCEVNGGPAPGRSQPRAPPNYEGSDMVE) is disordered.

As to quaternary structure, homodimer.

The protein localises to the cell membrane. It localises to the cell junction. Its subcellular location is the golgi apparatus. It is found in the trans-Golgi network. Its function is as follows. Involved in the regulation of cell migration. May be involved in mediating the organization of the parallel fibers of granule cells during cerebellar development. This is Protocadherin Fat 2 (Fat2) from Mus musculus (Mouse).